A 441-amino-acid polypeptide reads, in one-letter code: Nucleoprotein (441 aa).

The residue at position 5 (serine 5) is a Phosphoserine; by host. In terms of domain architecture, CoV N NTD spans 14 to 136 (VPLSLYAPLR…QLPSVVEIVE (123 aa)). The interval 16 to 146 (LSLYAPLRVT…PNTPPASRAN (131 aa)) is RNA-binding. Disordered stretches follow at residues 131-219 (VVEI…VTSR) and 231-278 (KSLG…LKDI). Phosphoserine; by host is present on serine 143. The segment covering 143-215 (SRANSRSRSR…NRNQSNDRGG (73 aa)) has biased composition (low complexity). Basic and acidic residues-rich tracts occupy residues 238-255 (NPDR…KSDN) and 269-278 (TSKERDLKDI). Residues 266–382 (SRATSKERDL…AFKTGNAKLQ (117 aa)) form the CoV N CTD domain. Residues 277–379 (DIPEWRRIPK…QVDAFKTGNA (103 aa)) are dimerization.

Belongs to the alphacoronavirus nucleocapsid protein family. In terms of assembly, homooligomer. Both monomeric and oligomeric forms interact with RNA. Interacts with protein M. Interacts with NSP3; this interaction serves to tether the genome to the newly translated replicase-transcriptase complex at a very early stage of infection. Interacts with host RSAD2; this interaction inhibits viral replication. Post-translationally, ADP-ribosylated. The ADP-ribosylation is retained in the virion during infection. Phosphorylated on serine and threonine residues.

The protein resides in the virion. The protein localises to the host endoplasmic reticulum-Golgi intermediate compartment. It localises to the host Golgi apparatus. In terms of biological role, packages the positive strand viral genome RNA into a helical ribonucleocapsid (RNP) and plays a fundamental role during virion assembly through its interactions with the viral genome and membrane protein M. Plays an important role in enhancing the efficiency of subgenomic viral RNA transcription as well as viral replication. In Porcine epidemic diarrhea virus (strain CV777) (PEDV), this protein is Nucleoprotein.